The primary structure comprises 2009 residues: Rootletin (2009 aa).

Coiled coils occupy residues 74–265 (EMAS…VTSD) and 346–438 (ASLH…LRLQ). 5 disordered regions span residues 462 to 519 (ALSD…CSDS), 575 to 594 (RDQT…EAQR), 636 to 665 (ELKR…LERS), 1180 to 1225 (EAQR…ELRS), and 1448 to 1501 (GRVS…EAVR). Residues 463–484 (LSDTESGVQLSSSERTADTSDG) are compositionally biased toward polar residues. Coiled-coil stretches lie at residues 550–1058 (LGSV…LLAE) and 1091–1439 (LEME…GLRS). Low complexity predominate over residues 577 to 586 (QTAASAQAQE). The span at 656 to 665 (ARARRELERS) shows a compositional bias: basic and acidic residues. Phosphoserine is present on residues Ser1453, Ser1463, and Ser1469. Phosphotyrosine is present on Tyr1475. Phosphoserine occurs at positions 1476, 1479, 1483, 1489, and 1568. The span at 1479 to 1494 (SQPPSPGLIASPAPPD) shows a compositional bias: pro residues. Coiled-coil stretches lie at residues 1498-1697 (EAVR…GTLQ) and 1744-1998 (HLQK…RSSA). The interval 1957–2009 (QVQTERTLEARERAHRQRVSGLEEQVSTLKAQLHQELRRSSASVSLPPGTPEK) is disordered.

This sequence belongs to the rootletin family. As to quaternary structure, homomer. Interacts with KLC3, NEK2 and the N-terminus of CEP250. Interacts with CEP44. Phosphorylated by NEK2 which may regulate its association with centrosomes. Highest expression detected in photoreceptor cells of retina. Expressed at lower levels in brain, trachea and kidney. Detected in all major ciliated epithelia. During embryonic development, enriched along the apical domains of neuroepithelium in brain ventricular zone, in primordia of retinal pigment epithelia and in neural retina.

The protein localises to the cytoplasm. It localises to the cytoskeleton. Its subcellular location is the microtubule organizing center. It is found in the centrosome. The protein resides in the centriole. The protein localises to the cilium basal body. Its function is as follows. Major structural component of the ciliary rootlet, a cytoskeletal-like structure in ciliated cells which originates from the basal body at the proximal end of a cilium and extends proximally toward the cell nucleus. Furthermore, is required for the correct positioning of the cilium basal body relative to the cell nucleus, to allow for ciliogenesis. Contributes to centrosome cohesion before mitosis. In Mus musculus (Mouse), this protein is Rootletin.